The following is a 439-amino-acid chain: Glutamate--tRNA ligase 2 (439 aa).

The 'HIGH' region signature appears at Pro-9–Asn-19. A 'KMSKS' region motif is present at residues Lys-233–Arg-237. Residue Lys-236 coordinates ATP.

Belongs to the class-I aminoacyl-tRNA synthetase family. Glutamate--tRNA ligase type 1 subfamily. In terms of assembly, monomer.

The protein resides in the cytoplasm. It catalyses the reaction tRNA(Glu) + L-glutamate + ATP = L-glutamyl-tRNA(Glu) + AMP + diphosphate. Functionally, catalyzes the attachment of glutamate to tRNA(Glu) in a two-step reaction: glutamate is first activated by ATP to form Glu-AMP and then transferred to the acceptor end of tRNA(Glu). The sequence is that of Glutamate--tRNA ligase 2 from Sphingopyxis alaskensis (strain DSM 13593 / LMG 18877 / RB2256) (Sphingomonas alaskensis).